We begin with the raw amino-acid sequence, 210 residues long: MDNLNVFANEDNQVNGLKRPPPSRVCPRCDSDNTKFCFYNNYSESQPRYFCKNCRRYWTHGGALRNIPVGGSCRKPKRLKVDQSSISEMVSVENQPINHQSFRQTQENNEFVRSFDASSSATVTAVPNHFGYLSELHGVTNLLPIQSFRTMDCLDFGDESFQQGYYDVGSNDLIDNPLINQSIGGYVDNLTSYCINQVEPKLQPRYEHES.

The Dof-type zinc finger occupies 24 to 78 (RVCPRCDSDNTKFCFYNNYSESQPRYFCKNCRRYWTHGGALRNIPVGGSCRKPKR). Zn(2+)-binding residues include Cys26, Cys29, Cys51, and Cys54.

Its subcellular location is the nucleus. Functionally, transcription factor that binds specifically to a 5'-AA[AG]G-3' consensus core sequence. The sequence is that of Dof zinc finger protein DOF4.4 (DOF4.4) from Arabidopsis thaliana (Mouse-ear cress).